The primary structure comprises 78 residues: Small ribosomal subunit protein bS18c (78 aa).

It belongs to the bacterial ribosomal protein bS18 family. Part of the 30S ribosomal subunit.

The protein resides in the plastid. The protein localises to the chloroplast. The polypeptide is Small ribosomal subunit protein bS18c (Oltmannsiellopsis viridis (Marine flagellate)).